The primary structure comprises 376 residues: Serpin B9 (376 aa).

Met-1 is modified (N-acetylmethionine).

This sequence belongs to the serpin family. Ov-serpin subfamily.

The protein resides in the cytoplasm. In terms of biological role, granzyme B inhibitor. This is Serpin B9 (SERPINB9) from Homo sapiens (Human).